A 147-amino-acid polypeptide reads, in one-letter code: Putative fibroblast growth factor 1 (147 aa).

Asn-25 lines the heparin pocket. The tract at residues 117–133 (KKNGKMKRGPRTHIGQK) is heparin-binding.

Belongs to the heparin-binding growth factors family.

It localises to the secreted. The protein localises to the cytoplasm. The protein resides in the cell cortex. Its subcellular location is the cytosol. It is found in the nucleus. Plays an important role in the regulation of cell survival, cell division, angiogenesis, cell differentiation and cell migration. Functions as a potent mitogen in vitro. Acts as a ligand for FGFR1 and integrins. Binds to FGFR1 in the presence of heparin leading to FGFR1 dimerization and activation via sequential autophosphorylation on tyrosine residues which act as docking sites for interacting proteins, leading to the activation of several signaling cascades. Binds to integrins. Its binding to integrins and subsequent ternary complex formation with integrins and FGFR1 are essential for FGF1 signaling. This is Putative fibroblast growth factor 1 (fgf1) from Danio rerio (Zebrafish).